Reading from the N-terminus, the 118-residue chain is Small ribosomal subunit protein uS13 (118 aa).

The interval 94-118 (GLPLRGQRTKTNARTRKGPRKPIRK) is disordered.

Belongs to the universal ribosomal protein uS13 family. Part of the 30S ribosomal subunit. Forms a loose heterodimer with protein S19. Forms two bridges to the 50S subunit in the 70S ribosome.

Its function is as follows. Located at the top of the head of the 30S subunit, it contacts several helices of the 16S rRNA. In the 70S ribosome it contacts the 23S rRNA (bridge B1a) and protein L5 of the 50S subunit (bridge B1b), connecting the 2 subunits; these bridges are implicated in subunit movement. Contacts the tRNAs in the A and P-sites. The polypeptide is Small ribosomal subunit protein uS13 (Alcanivorax borkumensis (strain ATCC 700651 / DSM 11573 / NCIMB 13689 / SK2)).